The following is a 184-amino-acid chain: Photosystem I assembly protein Ycf4 (184 aa).

The next 2 membrane-spanning stretches (helical) occupy residues 22 to 42 (FCWA…GTSS) and 57 to 77 (IVFF…LFIS).

The protein belongs to the Ycf4 family.

It is found in the plastid. The protein localises to the chloroplast thylakoid membrane. Its function is as follows. Seems to be required for the assembly of the photosystem I complex. This is Photosystem I assembly protein Ycf4 from Helianthus annuus (Common sunflower).